Reading from the N-terminus, the 134-residue chain is MAEQQQQRSLSAELQELVLVALGAVPGALLRWQVALHWADRHLLVNVLGAALLGLLAGLPAAPRRQLLVGIGFCGSLTTFSSWMVDAMQLISAGQIAEAFGLIGLTLGLGVGAAALGFWLGQRLRLLKLPRSEP.

The next 4 helical transmembrane spans lie at 10–30 (LSAE…GALL), 43–63 (LLVN…PAAP), 67–87 (LLVG…MVDA), and 100–120 (FGLI…GFWL). G75 and T78 together coordinate Na(+).

The protein belongs to the fluoride channel Fluc/FEX (TC 1.A.43) family.

It is found in the cell inner membrane. It catalyses the reaction fluoride(in) = fluoride(out). Na(+) is not transported, but it plays an essential structural role and its presence is essential for fluoride channel function. Its function is as follows. Fluoride-specific ion channel. Important for reducing fluoride concentration in the cell, thus reducing its toxicity. This Synechococcus sp. (strain CC9902) protein is Fluoride-specific ion channel FluC 2.